Consider the following 304-residue polypeptide: Caspase-6 (304 aa).

Residues 1–29 (MSGAERRPAAGRVQLDSKPTPTTTADGNQ) form a disordered region. Residues 1-35 (MSGAERRPAAGRVQLDSKPTPTTTADGNQNITEVD) constitute a propeptide that is removed on maturation. The span at 17–29 (SKPTPTTTADGNQ) shows a compositional bias: polar residues. The segment at 54-56 (QRR) is tri-arginine exosite. The active site involves histidine 133. Residues 137–154 (DHVYAYDAQIKIETITNM) are 130's region. The active site involves cysteine 175. The propeptide occupies 192-204 (SKDETTVNQTEVD).

Belongs to the peptidase C14A family. Heterotetramer that consists of two anti-parallel arranged heterodimers, each one formed by a 18 kDa (p18) and a 11 kDa (p11) subunit. As to quaternary structure, heterotetramer that consists of two anti-parallel arranged heterodimers, each one formed by a 18 kDa (Caspase-6 subunit p18) and a 11 kDa (Caspase-6 subunit p11) subunit. As to expression, widely expressed.

It is found in the cytoplasm. The protein localises to the nucleus. It carries out the reaction Strict requirement for Asp at position P1 and has a preferred cleavage sequence of Val-Glu-His-Asp-|-.. With respect to regulation, during activation, the N-terminal prodomain is removed by cleavage. Concomitantly, double cleavage gives rise to a large 18-kDa and a small 11-kDa subunit. The two large and two small subunits then assemble to form the active CASP6 complex. Intramolecular cleavage at Asp-191 is a prerequisite for CASP6 self-activation. In terms of biological role, cysteine protease that plays essential roles in programmed cell death, development and innate immunity. Acts as a non-canonical executioner caspase during apoptosis: localizes in the nucleus and cleaves the nuclear structural protein lamin-A/LMNA thereby inducing nuclear shrinkage and fragmentation. Lamin-A/LMNA cleavage is required for chromatin condensation and nuclear disassembly during apoptotic execution. Plays an essential role in defense against viruses by acting as a central mediator of the ZBP1-mediated pyroptosis, apoptosis, and necroptosis (PANoptosis), independently of its cysteine protease activity. PANoptosis is a unique inflammatory programmed cell death, which provides a molecular scaffold that allows the interactions and activation of machinery required for inflammasome/pyroptosis, apoptosis and necroptosis. The sequence is that of Caspase-6 from Gallus gallus (Chicken).